A 465-amino-acid chain; its full sequence is Phytase A (465 aa).

The signal sequence occupies residues 1–26 (MVTLTFLLSAAYLLSGRVSAAPSSAG). Cysteines 30 and 39 form a disulfide. Gln-49, Tyr-50, Arg-80, His-81, Arg-84, and Thr-87 together coordinate 1D-myo-inositol hexakisphosphate. Cystine bridges form between Cys-70-Cys-412, Cys-213-Cys-463, Cys-262-Cys-280, and Cys-434-Cys-442. The active-site Nucleophile is the His-81. An N-linked (GlcNAc...) asparagine glycan is attached at Asn-104. Residue Arg-164 coordinates 1D-myo-inositol hexakisphosphate. A glycan (N-linked (GlcNAc...) asparagine) is linked at Asn-205. Asp-209 is a 1D-myo-inositol hexakisphosphate binding site. A glycan (N-linked (GlcNAc...) asparagine) is linked at Asn-228. Lys-299 provides a ligand contact to 1D-myo-inositol hexakisphosphate. Residues Asn-337 and Asn-350 are each glycosylated (N-linked (GlcNAc...) asparagine). 1D-myo-inositol hexakisphosphate contacts are provided by His-359 and Asp-360. The N-linked (GlcNAc...) asparagine glycan is linked to Asn-374.

This sequence belongs to the histidine acid phosphatase family. Monomer.

The protein resides in the secreted. The catalysed reaction is 1D-myo-inositol hexakisphosphate + H2O = 1D-myo-inositol 1,2,4,5,6-pentakisphosphate + phosphate. It carries out the reaction 1D-myo-inositol 1,2,4,5,6-pentakisphosphate + H2O = 1D-myo-inositol 1,2,5,6-tetrakisphosphate + phosphate. The enzyme catalyses 1D-myo-inositol 1,2,5,6-tetrakisphosphate + H2O = 1D-myo-inositol 1,2,6-trisphosphate + phosphate. It catalyses the reaction 1D-myo-inositol 1,2,6-trisphosphate + H2O = 1D-myo-inositol 1,2-bisphosphate + phosphate. The catalysed reaction is 1D-myo-inositol 1,2-bisphosphate + H2O = 1D-myo-inositol 2-phosphate + phosphate. Catalyzes the phosphate monoester hydrolysis of phytic acid (myo-inositol hexakisphosphate), which results in the stepwise formation of myo-inositol pentakis-, tetrakis-, tris-, bis-, and monophosphates, as well as the liberation of inorganic phosphate. Myo-inositol 2-monophosphate is the end product. Has a broad substrate specificity and is also able to dephosphorylate other classic acid phosphatase substrates such as p-nitrophenyl phosphate, phenyl phosphate, fructose 1,6-bisphosphate, fructose 6-phosphate, glucose 6-phosphate, ribose 5-phosphate, alpha-glycerophosphate, beta-glycerophosphate, 3-phosphoglycerate, phosphoenolpyruvate, as well as ADP and ATP. The protein is Phytase A (phyA) of Aspergillus fumigatus (strain ATCC MYA-4609 / CBS 101355 / FGSC A1100 / Af293) (Neosartorya fumigata).